The sequence spans 137 residues: Phosphoribosyl-AMP cyclohydrolase (137 aa).

Asp-84 serves as a coordination point for Mg(2+). Residue Cys-85 coordinates Zn(2+). Residues Asp-86 and Asp-88 each contribute to the Mg(2+) site. Zn(2+) is bound by residues Cys-101 and Cys-108.

This sequence belongs to the PRA-CH family. As to quaternary structure, homodimer. The cofactor is Mg(2+). Zn(2+) serves as cofactor.

It is found in the cytoplasm. It catalyses the reaction 1-(5-phospho-beta-D-ribosyl)-5'-AMP + H2O = 1-(5-phospho-beta-D-ribosyl)-5-[(5-phospho-beta-D-ribosylamino)methylideneamino]imidazole-4-carboxamide. It participates in amino-acid biosynthesis; L-histidine biosynthesis; L-histidine from 5-phospho-alpha-D-ribose 1-diphosphate: step 3/9. In terms of biological role, catalyzes the hydrolysis of the adenine ring of phosphoribosyl-AMP. The chain is Phosphoribosyl-AMP cyclohydrolase from Chlorobium phaeovibrioides (strain DSM 265 / 1930) (Prosthecochloris vibrioformis (strain DSM 265)).